The primary structure comprises 699 residues: SHC SH2 domain-binding protein 1 homolog A (699 aa).

3 PbH1 repeats span residues 480–502 (SAEL…EIYP), 503–524 (GSKC…LIKD), and 532–554 (IPKI…VLVK). The stretch at 603-627 (AVEHTNNLEKDQGNLAIAKEEVECE) forms a coiled coil.

The protein localises to the midbody. It localises to the cytoplasm. It is found in the cytoskeleton. The protein resides in the spindle. Its function is as follows. May play a role in signaling pathways governing cellular proliferation. The polypeptide is SHC SH2 domain-binding protein 1 homolog A (shcbp1-a) (Xenopus laevis (African clawed frog)).